The primary structure comprises 416 residues: Serine hydroxymethyltransferase 1 (416 aa).

(6S)-5,6,7,8-tetrahydrofolate contacts are provided by residues Leu121 and 125–127; that span reads GHL. Lys229 is modified (N6-(pyridoxal phosphate)lysine). Residues Glu245 and 354–356 each bind (6S)-5,6,7,8-tetrahydrofolate; that span reads SPF.

Belongs to the SHMT family. Homodimer. Requires pyridoxal 5'-phosphate as cofactor.

It is found in the cytoplasm. The enzyme catalyses (6R)-5,10-methylene-5,6,7,8-tetrahydrofolate + glycine + H2O = (6S)-5,6,7,8-tetrahydrofolate + L-serine. The protein operates within one-carbon metabolism; tetrahydrofolate interconversion. It participates in amino-acid biosynthesis; glycine biosynthesis; glycine from L-serine: step 1/1. In terms of biological role, catalyzes the reversible interconversion of serine and glycine with tetrahydrofolate (THF) serving as the one-carbon carrier. This reaction serves as the major source of one-carbon groups required for the biosynthesis of purines, thymidylate, methionine, and other important biomolecules. Also exhibits THF-independent aldolase activity toward beta-hydroxyamino acids, producing glycine and aldehydes, via a retro-aldol mechanism. The chain is Serine hydroxymethyltransferase 1 from Vibrio parahaemolyticus serotype O3:K6 (strain RIMD 2210633).